Here is a 91-residue protein sequence, read N- to C-terminus: DNA-binding protein HU-beta 2 (91 aa).

It belongs to the bacterial histone-like protein family.

Histone-like DNA-binding protein which is capable of wrapping DNA to stabilize it, and thus to prevent its denaturation under extreme environmental conditions. The chain is DNA-binding protein HU-beta 2 (hupB2) from Neisseria meningitidis serogroup A / serotype 4A (strain DSM 15465 / Z2491).